The following is a 55-amino-acid chain: uncharacterized protein (55 aa).

The next 2 membrane-spanning stretches (helical) occupy residues 2 to 19 (VIGL…SFIA) and 24 to 46 (LLSI…FRYF).

Its subcellular location is the cell membrane. This is an uncharacterized protein from Alkalihalophilus pseudofirmus (strain ATCC BAA-2126 / JCM 17055 / OF4) (Bacillus pseudofirmus).